Consider the following 921-residue polypeptide: Isoleucine--tRNA ligase (921 aa).

Residues 59–69 (PYANGHLHIGH) carry the 'HIGH' region motif. Glutamate 569 is a binding site for L-isoleucyl-5'-AMP. The short motif at 610–614 (KMSKS) is the 'KMSKS' region element. ATP is bound at residue lysine 613. Residues cysteine 896, cysteine 899, cysteine 911, and cysteine 914 each coordinate Zn(2+).

Belongs to the class-I aminoacyl-tRNA synthetase family. IleS type 1 subfamily. As to quaternary structure, monomer. Zn(2+) serves as cofactor.

It localises to the cytoplasm. The catalysed reaction is tRNA(Ile) + L-isoleucine + ATP = L-isoleucyl-tRNA(Ile) + AMP + diphosphate. Functionally, catalyzes the attachment of isoleucine to tRNA(Ile). As IleRS can inadvertently accommodate and process structurally similar amino acids such as valine, to avoid such errors it has two additional distinct tRNA(Ile)-dependent editing activities. One activity is designated as 'pretransfer' editing and involves the hydrolysis of activated Val-AMP. The other activity is designated 'posttransfer' editing and involves deacylation of mischarged Val-tRNA(Ile). This is Isoleucine--tRNA ligase from Campylobacter hominis (strain ATCC BAA-381 / DSM 21671 / CCUG 45161 / LMG 19568 / NCTC 13146 / CH001A).